Reading from the N-terminus, the 682-residue chain is Potassium-transporting ATPase ATP-binding subunit (682 aa).

4 helical membrane-spanning segments follow: residues Pro34–Ala54, Ala62–Ala82, Ile219–Leu239, and Val254–Ile274. Asp307 (4-aspartylphosphate intermediate) is an active-site residue. ATP contacts are provided by residues Asp344, Glu348, Phe377–Ser384, and Lys395. Residues Asp518 and Asp522 each contribute to the Mg(2+) site. Helical transmembrane passes span Phe588–Met608, Ala616–Leu636, and Ile656–Leu676.

It belongs to the cation transport ATPase (P-type) (TC 3.A.3) family. Type IA subfamily. As to quaternary structure, the system is composed of three essential subunits: KdpA, KdpB and KdpC.

It is found in the cell inner membrane. It carries out the reaction K(+)(out) + ATP + H2O = K(+)(in) + ADP + phosphate + H(+). Part of the high-affinity ATP-driven potassium transport (or Kdp) system, which catalyzes the hydrolysis of ATP coupled with the electrogenic transport of potassium into the cytoplasm. This subunit is responsible for energy coupling to the transport system and for the release of the potassium ions to the cytoplasm. The chain is Potassium-transporting ATPase ATP-binding subunit from Shigella sonnei (strain Ss046).